The primary structure comprises 192 residues: Phosphomevalonate kinase (192 aa).

ATP is bound by residues 17–23 and arginine 141; that span reads KRKSGKD. Asparagine 170 contributes to the substrate binding site. Residues histidine 171 and glutamine 180 each coordinate ATP.

As to quaternary structure, monomer.

The protein localises to the cytoplasm. The protein resides in the cytosol. It carries out the reaction (R)-5-phosphomevalonate + ATP = (R)-5-diphosphomevalonate + ADP. It participates in isoprenoid biosynthesis; isopentenyl diphosphate biosynthesis via mevalonate pathway; isopentenyl diphosphate from (R)-mevalonate: step 2/3. Catalyzes the reversible ATP-dependent phosphorylation of mevalonate 5-phosphate to produce mevalonate diphosphate and ADP, a key step in the mevalonic acid mediated biosynthesis of isopentenyl diphosphate and other polyisoprenoid metabolites. The chain is Phosphomevalonate kinase (PMVK) from Bos taurus (Bovine).